Reading from the N-terminus, the 406-residue chain is LIM/homeobox protein Lhx1 (406 aa).

LIM zinc-binding domains lie at C4–D54 and C63–D117. Residues A125–G136 are compositionally biased toward polar residues. Disordered regions lie at residues A125–I187 and F296–V372. Over residues S137–P148 the composition is skewed to low complexity. Residues D151–G167 are compositionally biased toward basic and acidic residues. A DNA-binding region (homeobox) is located at residues R180 to K239.

It is found in the nucleus. Functionally, transcriptional factor that defines subclasses of motoneurons that segregate into columns in the spinal cord and select distinct axon pathways. Acts in conjunction with ISL-2. This Gallus gallus (Chicken) protein is LIM/homeobox protein Lhx1 (LHX1).